The following is a 310-amino-acid chain: Mitochondrial citrate transporter E (310 aa).

Solcar repeat units follow at residues S2 to G95, Q107 to R199, and D208 to I293. Helical transmembrane passes span F8–V28, G72–L92, L114–V133, A178–R198, G211–M228, and I265–L286.

This sequence belongs to the mitochondrial carrier (TC 2.A.29) family.

It localises to the mitochondrion inner membrane. Functionally, mitochondrial transporter that does not mediate citrate export from mitochondria to cytoplasm. Its exact function has still to be determined. This chain is Mitochondrial citrate transporter E, found in Aspergillus niger (strain ATCC 1015 / CBS 113.46 / FGSC A1144 / LSHB Ac4 / NCTC 3858a / NRRL 328 / USDA 3528.7).